A 448-amino-acid polypeptide reads, in one-letter code: Vacuolar amino acid transporter 6 (448 aa).

Residues 1 to 7 (MVASIRS) lie on the Cytoplasmic side of the membrane. Residues 8–28 (GVLTLLHTACGAGILAMPYAF) traverse the membrane as a helical segment. Residues 29-32 (KPFG) lie on the Vacuolar side of the membrane. Residues 33–53 (LIPGVIMIVLCGACAMQSLFI) form a helical membrane-spanning segment. The Cytoplasmic segment spans residues 54 to 80 (QARVAKYVPQGRASFSALTRLINPNLG). The chain crosses the membrane as a helical span at residues 81–101 (IVFDLAIAIKCFGVGVSYMIV). Residues 102-125 (VGDLMPQIMSVWTRNAWLLNRNVQ) lie on the Vacuolar side of the membrane. Residues 126–146 (ISLIMLFFVAPLSFLKKLNSL) form a helical membrane-spanning segment. Over 147–150 (RYAS) the chain is Cytoplasmic. The helical transmembrane segment at 151-171 (MVAISSVAYLCVLVLLHYVAP) threads the bilayer. The Vacuolar segment spans residues 172 to 195 (SDEILRLKGRISYLLPPQSHDLNV). The chain crosses the membrane as a helical span at residues 196-216 (LNTLPIFVFAYTCHHNMFSII). Residues 217 to 229 (NEQRSSRFEHVMK) are Cytoplasmic-facing. Residues 230–250 (IPLIAISLALILYIAIGCAGY) form a helical membrane-spanning segment. The Vacuolar segment spans residues 251–267 (LTFGDNIIGNIIMLYPQ). The chain crosses the membrane as a helical span at residues 268–288 (AVSSTIGRIAIVLLVMLAFPL). Over 289–357 (QCHPARASIH…PKETPLRGKS (69 aa)) the chain is Cytoplasmic. Residue serine 344 is modified to Phosphoserine. The chain crosses the membrane as a helical span at residues 358–378 (FIVITCSILVASYLVAISVSS). Residues 379–381 (LAR) are Vacuolar-facing. A helical transmembrane segment spans residues 382–402 (VLAIVGATGSTSISFILPGLF). At 403-424 (GYKLIGTEHKTAVPLTTKIFKY) the chain is on the cytoplasmic side. A helical membrane pass occupies residues 425-445 (TGLLLFIWGLIIMITCLTAAL). Over 446-448 (KLN) the chain is Vacuolar.

The protein belongs to the amino acid/polyamine transporter 2 family.

The protein resides in the vacuole membrane. In terms of biological role, involved in amino acid efflux from the vacuole to the cytoplasm. Capable of transporting aspartate and glutamate. Requires ATP for function. The sequence is that of Vacuolar amino acid transporter 6 (AVT6) from Saccharomyces cerevisiae (strain ATCC 204508 / S288c) (Baker's yeast).